A 120-amino-acid polypeptide reads, in one-letter code: MFVLSGYEYLLVFLIVCSLLPILALGASALLAPKRRGSLRRSTYESGMEPFGQAWIQFNIRYYMFALVFVIFDVETVFLYPWAVAFHRLGLLAFVEALIFIAILVVGLVYAWRKGALEWS.

Transmembrane regions (helical) follow at residues 10–30 (LLVFLIVCSLLPILALGASAL), 64–84 (MFALVFVIFDVETVFLYPWAV), and 89–109 (LGLLAFVEALIFIAILVVGLV).

The protein belongs to the complex I subunit 3 family. In terms of assembly, NDH-1 can be composed of about 15 different subunits; different subcomplexes with different compositions have been identified which probably have different functions.

It localises to the cellular thylakoid membrane. It carries out the reaction a plastoquinone + NADH + (n+1) H(+)(in) = a plastoquinol + NAD(+) + n H(+)(out). The catalysed reaction is a plastoquinone + NADPH + (n+1) H(+)(in) = a plastoquinol + NADP(+) + n H(+)(out). In terms of biological role, NDH-1 shuttles electrons from an unknown electron donor, via FMN and iron-sulfur (Fe-S) centers, to quinones in the respiratory and/or the photosynthetic chain. The immediate electron acceptor for the enzyme in this species is believed to be plastoquinone. Couples the redox reaction to proton translocation, and thus conserves the redox energy in a proton gradient. Cyanobacterial NDH-1 also plays a role in inorganic carbon-concentration. This Synechococcus sp. (strain JA-2-3B'a(2-13)) (Cyanobacteria bacterium Yellowstone B-Prime) protein is NAD(P)H-quinone oxidoreductase subunit 3.